The following is a 303-amino-acid chain: MQPSQLRSLTTESRNPNTMGISQADPLEILQMINEEDMKVAQAVNLVLPHVKTASDFAYDSISNGGRLIYLGAGTSGRLGVMDAVECPPTYSVSPDVIVGIMAGGDSAFSHAAEDVEDSEEAGKQDLVHIHLTSKDTVVGIAASGRTPYIIGALNYAKSIGAKTVALSCNEQSKISELADCAIEVIVGPEAITGSTRMKAASAHKMILNMLSTSVMIRQGKVYENLMVDVKVSNHKLKERAITIIQHVTNASYEQALKTLEAADLEVKTAIVMLQTNTDKKTAKDLLNKANGHIDKAISHHQS.

The tract at residues Met-1 to Ile-21 is disordered. The 164-residue stretch at Ala-58–Lys-221 folds into the SIS domain. The Proton donor role is filled by Glu-86. Glu-117 is an active-site residue.

The protein belongs to the GCKR-like family. MurNAc-6-P etherase subfamily. Homodimer.

The catalysed reaction is N-acetyl-D-muramate 6-phosphate + H2O = N-acetyl-D-glucosamine 6-phosphate + (R)-lactate. Its pathway is amino-sugar metabolism; N-acetylmuramate degradation. Functionally, specifically catalyzes the cleavage of the D-lactyl ether substituent of MurNAc 6-phosphate, producing GlcNAc 6-phosphate and D-lactate. This chain is N-acetylmuramic acid 6-phosphate etherase, found in Bacillus pumilus (strain SAFR-032).